The chain runs to 443 residues: EGF-containing fibulin-like extracellular matrix protein 2 (443 aa).

The signal sequence occupies residues 1-25; it reads MLPFASCLPGSLLLWALLLLLLGAA. The EGF-like 1; atypical domain occupies 36 to 81; the sequence is YTECTDGYEWDADSQHCRDVNECLTIPEACKGEMKCINHYGGYLCL. 18 cysteine pairs are disulfide-bonded: C58-C121, C65-C80, C71-C109, C127-C140, C134-C149, C151-C162, C168-C177, C173-C186, C188-C201, C207-C217, C213-C226, C228-C241, C247-C258, C254-C267, C269-C281, C287-C300, C294-C309, and C315-C327. An EGF-like 2; calcium-binding domain is found at 123–163; sequence DVDECAQALHDCRPSQDCHNLPGSYQCTCPDGYRKVGPECV. The EGF-like 3; calcium-binding domain maps to 164–202; sequence DIDECRYRYCQHRCVNLPGSFRCQCEPGFQLGPNNRSCV. Residue N198 is glycosylated (N-linked (GlcNAc...) asparagine). One can recognise an EGF-like 4; calcium-binding domain in the interval 203–242; that stretch reads DVNECDMGAPCEQRCFNSYGTFLCRCNQGYELHRDGFSCS. One can recognise an EGF-like 5; calcium-binding domain in the interval 243-282; the sequence is DIDECSYSSYLCQYRCVNEPGRFSCHCPQGYQLLATRLCQ. An EGF-like 6; calcium-binding domain is found at 283 to 328; that stretch reads DIDECETGAHQCSEAQTCVNFHGGYRCVDTNRCVEPYVQVSDNRCF. N-linked (GlcNAc...) asparagine glycosylation occurs at N394.

This sequence belongs to the fibulin family. Homodimer; disulfide-linked. Multimer; allows heparin binding. Monomer. Interacts with FBN1 (via N-terminal domain); this interaction inhibits EFEMP2 binding to LOX and ELN. Interacts with LOX (via propeptide); this interaction is strong and facilitates formation of ternary complexes with ELN during elastic fiber assembly; this interaction limits interaction of EFEMP2 with FBLN5. Interacts with PITX2. Interacts with ELN with moderate affinity; this interaction regulates ELN self-assembly maturation stage. Interacts with FBLN5 with moderate affinity. Interacts with LOXL1 (via propeptide), LTBP1 and TGFB1 stronger than with LOXL2 and LTBP3. Interacts with PCOLCE. Interacts with collagen type IV trimer (COL4A1-COL4A1-COL4A2), NID2 and moderately with COL15A1-derived endostatin. Interacts with EMILIN1; this interaction promotes the incorporation of EFEMP2 into the extracellular matrix. Interacts with LTBP4; the LTBP4 long form (LTBP4L) has a stronger binding affinity than the LTBP4 short form and the LTBP4 long form promotes fibrillar deposition of EFEMP2. N-glycosylated; contains mostly complex-type glycans. Not O-glycosylated. In terms of processing, cleaved by ELANE; produces a 50-55 kDa fragment. Cleaved by MMP2 and MMP9; produces several fragments.

It is found in the secreted. It localises to the extracellular space. Its subcellular location is the extracellular matrix. The protein resides in the basement membrane. In terms of biological role, plays a crucial role in elastic fiber formation in tissue, and in the formation of ultrastructural connections between elastic laminae and smooth muscle cells in the aorta, therefore participates in terminal differentiation and maturation of smooth muscle cell (SMC) and in the mechanical properties and wall integrity maintenance of the aorta. In addition, is involved in the control of collagen fibril assembly in tissue throught proteolytic activation of LOX leading to cross- linking of collagen and elastin. Also promotes ELN coacervation and participates in the deposition of ELN coacervates on to microfibrils but also regulates ELN cross- linking through LOX interaction. Moreover adheres to the cells through heparin binding in a calcium-dependent manner and regulates vascularlar smooth muscle cells proliferation through angiotensin signaling. The chain is EGF-containing fibulin-like extracellular matrix protein 2 from Cricetulus griseus (Chinese hamster).